The sequence spans 66 residues: Toxin NaTx-4 (66 aa).

One can recognise an LCN-type CS-alpha/beta domain in the interval 1-64; the sequence is KEGYLVNKET…TFPIPGKTCS (64 aa). 4 disulfides stabilise this stretch: C12–C63, C16–C39, C25–C44, and C29–C46.

The protein belongs to the long (4 C-C) scorpion toxin superfamily. Sodium channel inhibitor family. In terms of tissue distribution, expressed by the venom gland.

The protein localises to the secreted. Functionally, probable sodium channel inhibitor. This chain is Toxin NaTx-4, found in Centruroides sculpturatus (Arizona bark scorpion).